Consider the following 99-residue polypeptide: MAALNGLVLLLLTISAMFISECYSSGESQSIQRKGQCEEVTCHRTLNHLGVAVTSGCPSGCLCVISAPDSAVNVNGTCYQLMGSTSTTTSSTPSSEDQE.

Residues 1–24 form the signal peptide; the sequence is MAALNGLVLLLLTISAMFISECYS. 3 disulfides stabilise this stretch: Cys37–Cys61, Cys42–Cys63, and Cys57–Cys78.

The protein belongs to the RaCI family. Expressed in salivary glands.

It localises to the secreted. Its function is as follows. Complement inhibitor. Prevents complement-mediated C5 activation by binding to C5. Binds C5 at a different binding site than the other tick complement inhibitors OmCI and CirpT1, and the drug eculizumab. In Dermacentor andersoni (Rocky mountain wood tick), this protein is Complement inhibitor RaCI7.